The primary structure comprises 1238 residues: Virulence sensor protein BvgS (1238 aa).

The N-terminal stretch at 1-32 (MPAPHRLYPRSLICLAQALLVWALLAWAPAQA) is a signal peptide. Residues 33–307 (SQELTLVGKA…REQQWMANHP (275 aa)) are Cytoplasmic-facing. A helical transmembrane segment spans residues 308–331 (VVKVAVLNLFAPFTLFRTDEQFGG). Over 332 to 541 (ISAAVLQLLQ…PRTWYAYRNE (210 aa)) the chain is Periplasmic. A helical transmembrane segment spans residues 542–563 (IYLLIGLGLLSALLFLSWIVYL). Residues 564 to 1238 (RRQIRQRKRA…LEQRPHQGQP (675 aa)) lie on the Cytoplasmic side of the membrane. A PAS domain is found at 580–651 (QLEFMRVLID…MHEFLLTRMA (72 aa)). The PAC domain occupies 652–708 (AEREPRFEDRDVTLHGRTRHVYQWTVPYGDSLGELKGIIGGWIDITERAELLRELHD). The Histidine kinase domain maps to 726 to 948 (TMSHEIRTPM…TVSVDLRLTM (223 aa)). Phosphohistidine; by autocatalysis is present on His-729. One can recognise a Response regulatory domain in the interval 974–1095 (RVLVVDDHKP…ALRQRLNEAA (122 aa)). 4-aspartylphosphate is present on Asp-1023. The HPt domain occupies 1133-1228 (DEALIRQLLE…AALETQLRAW (96 aa)). Residue His-1172 is modified to Phosphohistidine.

Post-translationally, activation requires a sequential transfer of a phosphate group from a His in the primary transmitter domain, to an Asp in the receiver domain and to a His in the secondary transmitter domain.

Its subcellular location is the cell inner membrane. The catalysed reaction is ATP + protein L-histidine = ADP + protein N-phospho-L-histidine.. Functionally, member of the two-component regulatory system BvgS/BvgA. Phosphorylates BvgA via a four-step phosphorelay in response to environmental signals. This Bordetella parapertussis (strain 12822 / ATCC BAA-587 / NCTC 13253) protein is Virulence sensor protein BvgS (bvgS).